A 157-amino-acid polypeptide reads, in one-letter code: MAVKIKLQRLGKIRTPHYRVVVADARTRRDGKVIENIGIYEPKQDPSVIKIDSERAQYWLGVGAQPTEPVLALLKVTGDWQKFKGLEGAEGTLKVAEPKPSKLELFNQALAEANEGPTAEAITEKKKKAKEEAAAKAAAEAEAAAKAEEAPAEEAAE.

Positions 114-157 (NEGPTAEAITEKKKKAKEEAAAKAAAEAEAAAKAEEAPAEEAAE) are disordered.

It belongs to the bacterial ribosomal protein bS16 family.

The polypeptide is Small ribosomal subunit protein bS16 (Corynebacterium diphtheriae (strain ATCC 700971 / NCTC 13129 / Biotype gravis)).